Consider the following 1435-residue polypeptide: DNA polymerase III PolC-type (1435 aa).

The 157-residue stretch at 420–576 (YVVFDVETTG…YDTEATAYIF (157 aa)) folds into the Exonuclease domain.

The protein belongs to the DNA polymerase type-C family. PolC subfamily.

It localises to the cytoplasm. It catalyses the reaction DNA(n) + a 2'-deoxyribonucleoside 5'-triphosphate = DNA(n+1) + diphosphate. In terms of biological role, required for replicative DNA synthesis. This DNA polymerase also exhibits 3' to 5' exonuclease activity. The sequence is that of DNA polymerase III PolC-type from Staphylococcus aureus.